A 151-amino-acid polypeptide reads, in one-letter code: Deoxyuridine 5'-triphosphate nucleotidohydrolase (151 aa).

Residues 70 to 72 (RSG), Asn83, 87 to 89 (LID), and Met97 contribute to the substrate site.

The protein belongs to the dUTPase family. Mg(2+) is required as a cofactor.

It catalyses the reaction dUTP + H2O = dUMP + diphosphate + H(+). It functions in the pathway pyrimidine metabolism; dUMP biosynthesis; dUMP from dCTP (dUTP route): step 2/2. In terms of biological role, this enzyme is involved in nucleotide metabolism: it produces dUMP, the immediate precursor of thymidine nucleotides and it decreases the intracellular concentration of dUTP so that uracil cannot be incorporated into DNA. This is Deoxyuridine 5'-triphosphate nucleotidohydrolase from Mannheimia succiniciproducens (strain KCTC 0769BP / MBEL55E).